We begin with the raw amino-acid sequence, 241 residues long: Terpene cyclase pyr4 (241 aa).

7 helical membrane passes run 20–40, 49–69, 79–99, 113–133, 141–161, 168–188, and 206–226; these read IADWALLAQGLGWSINYLAMI, YGMAILPLCCNFAWEFVYSVI, AVLTTWMILNLFVMYTAIKFA, LPWIFPVAIAAFTAGHLALAA, ANWGAFLCFELLTSGAVCQLM, GASYTIWLSRFLGSYIGGIFL, and FVTWHGLMCFSLDIAYVTFLW.

The protein belongs to the paxB family.

It localises to the membrane. The enzyme catalyses 2-oxo-3-[(8S)-epoxy-(2E,6E)-farnesyl]-6-(pyridin-3-yl)-2H-pyran-4-olate + H(+) = deacetylpyripyropene E. Its pathway is secondary metabolite biosynthesis; terpenoid biosynthesis. Terpene cyclase; part of the gene cluster that mediates the biosynthesis of pyripyropene A, a specific human acyl-coenzyme A:cholesterol acyltransferase 2 inhibitor. The first step of the pathway is the synthesis of nicotinyl-CoA from nicotinic acid by the nicotinic acid-CoA ligase pyr1. Nicotinyl-CoA is then a substrate of polyketide synthase pyr2 to produce 4-hydroxy-6-(3-pyridinyl)-2H-pyran-2-one (HPPO) which is further prenylated by the polyprenyl transferase pyr6 to yield farnesyl-HPPO. The next steps consist of an epoxidation of farnesyl-HPPO to epoxyfarnesyl-HPPO by FAD-dependent monooxygenase pyr5 and a cyclization of the terpenoid portion by the terpene cyclase pyr4 to yield deacetyl-pyripyropene E. The 2 cytochrome P450 monooxygenases pyr3 and pyr9, and the 2 acetyltransferases pyr7 and pyr8 are involved in the conversion of deacetyl-pyripyropene E into pyripyropene A through several cycles of oxidation and acetylation steps. Pyr7 acetylates deacetyl-pyripyropene E to pyripyropene E which is oxidized to 11-deacetyl-pyripyropene O by pyr3, which is in turn acetylated into pyripyropene O by pyr8. Pyripyropene O is then oxidized to deacetyl-pyripyropene A by pyr9. Deacetyl-pyripyropene A is finally acetylated to pyripyropene A by pyr8. The protein is Terpene cyclase pyr4 of Aspergillus fumigatus (strain ATCC MYA-4609 / CBS 101355 / FGSC A1100 / Af293) (Neosartorya fumigata).